The following is an 85-amino-acid chain: Large ribosomal subunit protein bL27 (85 aa).

The interval 1 to 20 is disordered; that stretch reads MATKKAGGSTKNGRDSNPKM.

It belongs to the bacterial ribosomal protein bL27 family.

The polypeptide is Large ribosomal subunit protein bL27 (Acinetobacter baumannii (strain AB307-0294)).